The primary structure comprises 333 residues: Fe(3+)-citrate import system permease protein YfmD (333 aa).

9 helical membrane-spanning segments follow: residues 13-33 (LMMF…NLSV), 67-87 (TLIG…MQAM), 97-117 (IFGV…ILPA), 121-141 (SSVI…YMIA), 151-171 (LALS…AIII), 201-221 (FSVI…VLGL), 238-258 (ILIS…AGPI), 279-299 (YVLP…DVLA), and 302-322 (IAFP…TPFF).

It belongs to the binding-protein-dependent transport system permease family. FecCD subfamily. The complex is composed of one ATP-binding protein (YfmF), two transmembrane proteins (YfmD and YfmE) and a solute-binding protein (YfmC).

The protein resides in the cell membrane. Part of the ABC transporter complex YfmCDEF involved in citrate-dependent Fe(3+) import. Involved in the translocation of the substrate across the membrane. The sequence is that of Fe(3+)-citrate import system permease protein YfmD (yfmD) from Bacillus subtilis (strain 168).